We begin with the raw amino-acid sequence, 196 residues long: Protein Flattop (196 aa).

The tract at residues 107-196 (NGLRPEIFGK…PHAGRNLAEV (90 aa)) is disordered. The segment covering 113-124 (IFGKPHDPDSQK) has biased composition (basic and acidic residues). The span at 137–149 (APSPTIIPSSPAS) shows a compositional bias: low complexity. The span at 150–162 (NLSSPDQLQSSHP) shows a compositional bias: polar residues.

Belongs to the Flattop family. In terms of assembly, microtubule inner protein component of sperm flagellar doublet microtubules. Interacts with DLG3. As to expression, expressed in trachea multiciliated cells.

Its subcellular location is the cytoplasm. It localises to the cytoskeleton. The protein resides in the cilium basal body. It is found in the cell projection. The protein localises to the cilium. Its subcellular location is the apical cell membrane. It localises to the cilium axoneme. The protein resides in the flagellum axoneme. Its function is as follows. Microtubule inner protein (MIP) part of the dynein-decorated doublet microtubules (DMTs) in cilia axoneme. Acts as a regulator of cilium basal body docking and positioning in mono- and multiciliated cells. Regulates basal body docking and cilia formation in multiciliated lung cells. Regulates kinocilium positioning and stereocilia bundle morphogenesis in the inner ear. This Bos taurus (Bovine) protein is Protein Flattop.